The chain runs to 282 residues: ATP synthase gamma chain (282 aa).

Belongs to the ATPase gamma chain family. F-type ATPases have 2 components, CF(1) - the catalytic core - and CF(0) - the membrane proton channel. CF(1) has five subunits: alpha(3), beta(3), gamma(1), delta(1), epsilon(1). CF(0) has three main subunits: a, b and c.

The protein resides in the cell membrane. Produces ATP from ADP in the presence of a proton gradient across the membrane. The gamma chain is believed to be important in regulating ATPase activity and the flow of protons through the CF(0) complex. This Clostridium botulinum (strain Okra / Type B1) protein is ATP synthase gamma chain.